We begin with the raw amino-acid sequence, 454 residues long: Death-associated protein kinase 3 (454 aa).

A Protein kinase domain is found at 13 to 275; sequence YEMGEELGSG…IAQSLEHSWI (263 aa). Residues 19-27 and Lys42 each bind ATP; that span reads LGSGQFAIV. Residue Ser50 is modified to Phosphoserine; by autocatalysis. Pyridone 6 is bound by residues Glu94 and Val96. The active-site Proton acceptor is the Asp139. The segment at 161-204 is activation segment; sequence DFGIAHKIEAGNEFKNIFGTPEFVAPEIVNYEPLGLEADMWSIG. Phosphothreonine occurs at positions 180 and 225. Position 265 is a phosphothreonine; by autocatalysis and ROCK1 (Thr265). Thr299 is modified (phosphothreonine; by autocatalysis, DAPK1 and ROCK1). A Phosphothreonine; by autocatalysis modification is found at Thr306. The residue at position 309 (Ser309) is a Phosphoserine; by DAPK1. Residue Ser311 is modified to Phosphoserine; by autocatalysis and DAPK1. Residues Ser312, Ser318, and Ser326 each carry the phosphoserine; by DAPK1 modification. A leucine-zipper region spans residues 427–441; it reads VASEMRFVQDLVRAL.

The protein belongs to the protein kinase superfamily. CAMK Ser/Thr protein kinase family. DAP kinase subfamily. As to quaternary structure, homooligomer in its kinase-active form (homotrimers and homodimers are reported); monomeric in its kinase-inactive form. Homodimerization is required for activation segment autophosphorylation. Isoform 1 and isoform 2 interact with myosin and PPP1R12A; interaction of isoform 1 with PPP1R12A is inhibited by RhoA dominant negative form. Interacts with NLK, DAXX, STAT3, RHOD (GTP-bound form) and TCP10L. Interacts with PAWR; the interaction is reported conflictingly: according to PubMed:17953487 does not interact with PAWR. Interacts with ULK1; may be a substrate of ULK1. Interacts with LUZP1; the interaction is likely to occur throughout the cell cycle and reduces the LUZP1-mediated suppression of MYL9 phosphorylation. Mg(2+) is required as a cofactor. In terms of processing, the phosphorylation status is critical for kinase activity, oligomerization and intracellular localization. Phosphorylation at Thr-180, Thr-225 and Thr-265 is essential for activity. The phosphorylated form is localized in the cytoplasm promoted by phosphorylation at Thr-299; nuclear translocation or retention is maximal when it is not phosphorylated. Phosphorylation increases the trimeric form, and its dephosphorylation favors a kinase-inactive monomeric form. Both isoform 1 and isoform 2 can undergo autophosphorylation. Widely expressed. Isoform 1 and isoform 2 are expressed in the bladder smooth muscle.

The protein localises to the nucleus. It localises to the PML body. It is found in the cytoplasm. Its subcellular location is the cytoskeleton. The protein resides in the microtubule organizing center. The protein localises to the centrosome. It localises to the chromosome. It is found in the centromere. Its subcellular location is the spindle. The protein resides in the midbody. It catalyses the reaction L-seryl-[protein] + ATP = O-phospho-L-seryl-[protein] + ADP + H(+). It carries out the reaction L-threonyl-[protein] + ATP = O-phospho-L-threonyl-[protein] + ADP + H(+). Its activity is regulated as follows. A sequential activation is proposed: autophosphorylation at consensus sites is leading to dimerization of the catalytic domain stabilized by phosphorylation at Ser-50 and activation segment exchange (producing an active confirmation of both kinase modules in trans) followed by phosphorylation at Thr-180 in the activation segment and at other regulatory sites. Phosphorylation at Thr-180, Thr-225 and Thr-265 is essential for activity. Oligomerization is required for full enzymatic activity. Inhibited by pyridone-6 (K00225), a potent, ATP-competitive inhibitor. In terms of biological role, serine/threonine kinase which is involved in the regulation of apoptosis, autophagy, transcription, translation and actin cytoskeleton reorganization. Involved in the regulation of smooth muscle contraction. Regulates both type I (caspase-dependent) apoptotic and type II (caspase-independent) autophagic cell deaths signal, depending on the cellular setting. Involved in regulation of starvation-induced autophagy. Regulates myosin phosphorylation in both smooth muscle and non-muscle cells. In smooth muscle, regulates myosin either directly by phosphorylating MYL12B and MYL9 or through inhibition of smooth muscle myosin phosphatase (SMPP1M) via phosphorylation of PPP1R12A; the inhibition of SMPP1M functions to enhance muscle responsiveness to Ca(2+) and promote a contractile state. Phosphorylates MYL12B in non-muscle cells leading to reorganization of actin cytoskeleton. Isoform 2 can phosphorylate myosin, PPP1R12A and MYL12B. Overexpression leads to condensation of actin stress fibers into thick bundles. Involved in actin filament focal adhesion dynamics. The function in both reorganization of actin cytoskeleton and focal adhesion dissolution is modulated by RhoD. Positively regulates canonical Wnt/beta-catenin signaling through interaction with NLK and TCF7L2. Phosphorylates RPL13A on 'Ser-77' upon interferon-gamma activation which is causing RPL13A release from the ribosome, RPL13A association with the GAIT complex and its subsequent involvement in transcript-selective translation inhibition. Enhances transcription from AR-responsive promoters in a hormone- and kinase-dependent manner. Involved in regulation of cell cycle progression and cell proliferation. May be a tumor suppressor. The sequence is that of Death-associated protein kinase 3 (DAPK3) from Homo sapiens (Human).